A 449-amino-acid chain; its full sequence is Biotin carboxylase (449 aa).

One can recognise a Biotin carboxylation domain in the interval 1–445 (MLDKIVIANR…NIHYLEKKLG (445 aa)). ATP-binding positions include K116, K159, 165-166 (GG), 201-204 (EKYL), H209, and H236. One can recognise an ATP-grasp domain in the interval 120–317 (IAAMKKAGVP…LIKEQLRIAA (198 aa)). Residue K238 coordinates hydrogencarbonate. ATP is bound by residues E276 and E288. Residues E276, E288, and N290 each coordinate Mg(2+). The Mn(2+) site is built by E276, E288, and N290. Residues R292, V295, and R338 each coordinate hydrogencarbonate. R292 is a catalytic residue. Position 338 (R338) interacts with biotin.

As to quaternary structure, acetyl-CoA carboxylase is a heterohexamer of biotin carboxyl carrier protein, biotin carboxylase and the two subunits of carboxyl transferase in a 2:2 complex. It depends on Mg(2+) as a cofactor. Mn(2+) is required as a cofactor.

The catalysed reaction is N(6)-biotinyl-L-lysyl-[protein] + hydrogencarbonate + ATP = N(6)-carboxybiotinyl-L-lysyl-[protein] + ADP + phosphate + H(+). It functions in the pathway lipid metabolism; malonyl-CoA biosynthesis; malonyl-CoA from acetyl-CoA: step 1/1. This protein is a component of the acetyl coenzyme A carboxylase complex; first, biotin carboxylase catalyzes the carboxylation of the carrier protein and then the transcarboxylase transfers the carboxyl group to form malonyl-CoA. The polypeptide is Biotin carboxylase (accC) (Escherichia coli (strain K12)).